The following is a 384-amino-acid chain: Glucose-1-phosphate adenylyltransferase (384 aa).

Alpha-D-glucose 1-phosphate-binding positions include Tyr103, Gly168, Glu183 to Lys184, and Ser194.

This sequence belongs to the bacterial/plant glucose-1-phosphate adenylyltransferase family. As to quaternary structure, homotetramer.

It carries out the reaction alpha-D-glucose 1-phosphate + ATP + H(+) = ADP-alpha-D-glucose + diphosphate. It functions in the pathway glycan biosynthesis; glycogen biosynthesis. In terms of biological role, involved in the biosynthesis of ADP-glucose, a building block required for the elongation reactions to produce glycogen. Catalyzes the reaction between ATP and alpha-D-glucose 1-phosphate (G1P) to produce pyrophosphate and ADP-Glc. This Fusobacterium nucleatum subsp. nucleatum (strain ATCC 25586 / DSM 15643 / BCRC 10681 / CIP 101130 / JCM 8532 / KCTC 2640 / LMG 13131 / VPI 4355) protein is Glucose-1-phosphate adenylyltransferase.